Here is a 659-residue protein sequence, read N- to C-terminus: Ion-translocating oxidoreductase complex subunit C (659 aa).

4Fe-4S ferredoxin-type domains follow at residues 366–397 (TEMGLSEPEQSCIRCGLCVDACPAGLLPQQLY) and 407–436 (KARNHNLFDCIECGACAYVCPSNIPLVQYY). [4Fe-4S] cluster-binding residues include cysteine 377, cysteine 380, cysteine 383, cysteine 387, cysteine 416, cysteine 419, cysteine 422, and cysteine 426.

It belongs to the 4Fe4S bacterial-type ferredoxin family. RnfC subfamily. The complex is composed of six subunits: RnfA, RnfB, RnfC, RnfD, RnfE and RnfG. The cofactor is [4Fe-4S] cluster.

The protein localises to the cell inner membrane. In terms of biological role, part of a membrane-bound complex that couples electron transfer with translocation of ions across the membrane. The polypeptide is Ion-translocating oxidoreductase complex subunit C (Yersinia pestis bv. Antiqua (strain Nepal516)).